Consider the following 736-residue polypeptide: uncharacterized protein (736 aa).

ABC transporter domains follow at residues 183–459 (IKID…KQME) and 518–734 (LQMS…TMTI). ATP is bound by residues 215 to 222 (GRNGIGKS) and 551 to 558 (GPNGAGKS).

The protein belongs to the ABC transporter superfamily.

It is found in the cytoplasm. This is an uncharacterized protein from Schizosaccharomyces pombe (strain 972 / ATCC 24843) (Fission yeast).